Reading from the N-terminus, the 93-residue chain is MKKLVLLSALVLLAYQVQTDPIQNTDEETNTEEQPGEEDQAVSVSFGGQEGSALHEKLSRDLICLCRKRRCNRGELFYGTCAGPFLRCCRRRR.

The signal sequence occupies residues 1-19; the sequence is MKKLVLLSALVLLAYQVQT. The propeptide occupies 20–58; that stretch reads DPIQNTDEETNTEEQPGEEDQAVSVSFGGQEGSALHEKL. The interval 22 to 41 is disordered; it reads IQNTDEETNTEEQPGEEDQA. Over residues 25-40 the composition is skewed to acidic residues; sequence TDEETNTEEQPGEEDQ. 3 disulfides stabilise this stretch: Cys64–Cys89, Cys66–Cys81, and Cys71–Cys88.

This sequence belongs to the alpha-defensin family.

It localises to the secreted. In terms of biological role, may have microbicidal activities. The chain is Alpha-defensin 22 (Defa22) from Mus musculus (Mouse).